The following is a 400-amino-acid chain: Poly(A) polymerase type 3 (400 aa).

ATP-binding positions include 97–99, T106, 110–112, D164, K225, Y234, and 243–244; these read FGS, DID, and GV. Residues D110, D112, and D164 each coordinate Mg(2+). A Nuclear localization signal motif is present at residues 382 to 390; the sequence is GEIINKNKK.

Belongs to the poly(A) polymerase family. As to quaternary structure, monomer. Mg(2+) serves as cofactor. It depends on Mn(2+) as a cofactor.

It is found in the nucleus. The enzyme catalyses RNA(n) + ATP = RNA(n)-3'-adenine ribonucleotide + diphosphate. In terms of biological role, polymerase that creates the 3'-poly(A) tail of mRNA's. May acquire specificity through interaction with a cleavage and polyadenylation factor (CPSF). In Xenopus laevis (African clawed frog), this protein is Poly(A) polymerase type 3.